The chain runs to 238 residues: Ribosomal RNA small subunit methyltransferase G (238 aa).

S-adenosyl-L-methionine contacts are provided by residues Gly-77, Phe-82, 128-129 (AE), and Arg-147. The disordered stretch occupies residues 219 to 238 (KKTPARYPRKPGTPNKQPIQ).

It belongs to the methyltransferase superfamily. RNA methyltransferase RsmG family.

It localises to the cytoplasm. Specifically methylates the N7 position of guanine in position 535 of 16S rRNA. This is Ribosomal RNA small subunit methyltransferase G from Geobacillus thermodenitrificans (strain NG80-2).